The chain runs to 157 residues: 17.8 kDa class I heat shock protein (157 aa).

Residues 43–157 enclose the sHSP domain; sequence ETAAFVNTHI…PEVKAIDISG (115 aa).

It belongs to the small heat shock protein (HSP20) family. Forms oligomeric structures.

Its subcellular location is the cytoplasm. This Daucus carota (Wild carrot) protein is 17.8 kDa class I heat shock protein.